The primary structure comprises 140 residues: Histone H2B (140 aa).

Basic and acidic residues predominate over residues 1-10; the sequence is MPPKAAEKKP. The segment at 1 to 48 is disordered; it reads MPPKAAEKKPSTGGKAPAGKAPAEKKEAGKKTAAAATGDKKKRGKTRK. 2 positions are modified to N6-acetyllysine; alternate: lysine 8 and lysine 9. Residues lysine 8 and lysine 9 each participate in a glycyl lysine isopeptide (Lys-Gly) (interchain with G-Cter in SUMO); alternate cross-link. Residues 11–21 show a composition bias toward low complexity; sequence STGGKAPAGKA. Lysine 15 is subject to N6-acetyllysine. Lysine 25 bears the N6-acetyllysine; alternate mark. Residue lysine 25 forms a Glycyl lysine isopeptide (Lys-Gly) (interchain with G-Cter in SUMO); alternate linkage. Residue lysine 26 forms a Glycyl lysine isopeptide (Lys-Gly) (interchain with G-Cter in SUMO) linkage. A Glycyl lysine isopeptide (Lys-Gly) (interchain with G-Cter in ubiquitin) cross-link involves residue lysine 134.

It belongs to the histone H2B family. As to quaternary structure, the nucleosome is a histone octamer containing two molecules each of H2A, H2B, H3 and H4 assembled in one H3-H4 heterotetramer and two H2A-H2B heterodimers. The octamer wraps approximately 147 bp of DNA. In terms of processing, monoubiquitinated by the ubc2-bre1 complex to form H2BK123ub1. H2BK123ub1 gives a specific tag for epigenetic transcriptional activation and is also prerequisite for H3K4me and H3K79me formation. H2BK123ub1 also modulates the formation of double-strand breaks during meiosis and is a prerequisite for DNA-damage checkpoint activation. Acetylated by gcn5 to form H2BK11ac and H2BK16ac. H2BK16ac can also be formed by esa1. Acetylation of N-terminal lysines and particularly formation of H2BK11acK16ac has a positive effect on transcription. Post-translationally, sumoylation to form H2BK6su or H2BK7su, and probably also H2BK16su or H2BK17su, occurs preferentially near the telomeres and represses gene transcription.

It is found in the nucleus. The protein resides in the chromosome. In terms of biological role, core component of nucleosome. Nucleosomes wrap and compact DNA into chromatin, limiting DNA accessibility to the cellular machineries which require DNA as a template. Histones thereby play a central role in transcription regulation, DNA repair, DNA replication and chromosomal stability. DNA accessibility is regulated via a complex set of post-translational modifications of histones, also called histone code, and nucleosome remodeling. The chain is Histone H2B (htb1) from Neosartorya fischeri (strain ATCC 1020 / DSM 3700 / CBS 544.65 / FGSC A1164 / JCM 1740 / NRRL 181 / WB 181) (Aspergillus fischerianus).